The primary structure comprises 199 residues: V-type ATP synthase subunit E (199 aa).

The protein belongs to the V-ATPase E subunit family.

Its function is as follows. Produces ATP from ADP in the presence of a proton gradient across the membrane. The sequence is that of V-type ATP synthase subunit E from Borrelia garinii subsp. bavariensis (strain ATCC BAA-2496 / DSM 23469 / PBi) (Borreliella bavariensis).